The following is a 331-amino-acid chain: Ferredoxin--NADP reductase (331 aa).

The FAD site is built by T20, E39, Q47, Y52, V92, F126, D287, and S328.

This sequence belongs to the ferredoxin--NADP reductase type 2 family. In terms of assembly, homodimer. Requires FAD as cofactor.

The enzyme catalyses 2 reduced [2Fe-2S]-[ferredoxin] + NADP(+) + H(+) = 2 oxidized [2Fe-2S]-[ferredoxin] + NADPH. The sequence is that of Ferredoxin--NADP reductase from Bacillus cereus (strain ZK / E33L).